We begin with the raw amino-acid sequence, 216 residues long: Ribosomal RNA large subunit methyltransferase E (216 aa).

S-adenosyl-L-methionine is bound by residues glycine 67, tryptophan 69, aspartate 87, aspartate 103, and aspartate 128. The Proton acceptor role is filled by lysine 168.

Belongs to the class I-like SAM-binding methyltransferase superfamily. RNA methyltransferase RlmE family.

Its subcellular location is the cytoplasm. It carries out the reaction uridine(2552) in 23S rRNA + S-adenosyl-L-methionine = 2'-O-methyluridine(2552) in 23S rRNA + S-adenosyl-L-homocysteine + H(+). In terms of biological role, specifically methylates the uridine in position 2552 of 23S rRNA at the 2'-O position of the ribose in the fully assembled 50S ribosomal subunit. In Acinetobacter baylyi (strain ATCC 33305 / BD413 / ADP1), this protein is Ribosomal RNA large subunit methyltransferase E.